We begin with the raw amino-acid sequence, 122 residues long: Basic phospholipase A2 (122 aa).

Disulfide bonds link Cys26–Cys115, Cys28–Cys44, Cys43–Cys95, Cys49–Cys122, Cys50–Cys88, Cys57–Cys81, and Cys75–Cys86. Residues Tyr27, Gly29, and Gly31 each coordinate Ca(2+). His47 is an active-site residue. Asp48 provides a ligand contact to Ca(2+). Residue Asp89 is part of the active site.

It belongs to the phospholipase A2 family. Group II subfamily. D49 sub-subfamily. As to quaternary structure, homodimer. It depends on Ca(2+) as a cofactor. As to expression, expressed by the venom gland.

It is found in the secreted. The enzyme catalyses a 1,2-diacyl-sn-glycero-3-phosphocholine + H2O = a 1-acyl-sn-glycero-3-phosphocholine + a fatty acid + H(+). Its function is as follows. Snake venom phospholipase A2 (PLA2) that inhibits neuromuscular transmission by blocking acetylcholine release from the nerve termini. PLA2 catalyzes the calcium-dependent hydrolysis of the 2-acyl groups in 3-sn-phosphoglycerides. The protein is Basic phospholipase A2 of Gloydius blomhoffii (Mamushi).